The primary structure comprises 140 residues: MSSRSIMGFDYGTKSIGVAIGQELTGTAQPLRAIKANDGVPNWDDIEKLLKEWQPDLLVVGLPLNMDGTEQEITVRARKFGNRLHGRFGKQVEFKDERLTTTDARARLFERGGYKALDKGSVDGVSAQLILEAWMEEQYG.

Belongs to the YqgF nuclease family.

The protein localises to the cytoplasm. Could be a nuclease involved in processing of the 5'-end of pre-16S rRNA. The sequence is that of Putative pre-16S rRNA nuclease from Aeromonas salmonicida (strain A449).